The chain runs to 576 residues: Potassium-transporting ATPase potassium-binding subunit (576 aa).

Transmembrane regions (helical) follow at residues 4 to 24, 65 to 85, 136 to 156, 179 to 199, 257 to 277, 288 to 308, 341 to 361, 371 to 391, 393 to 413, 430 to 450, 497 to 517, and 540 to 560; these read QAWI…WPLG, AYAL…YALQ, ALGV…FALI, VYVL…QGVI, LSNF…VFAF, GALL…VTSL, FGIA…CGAV, LGGA…GGVG, GLYG…LMIG, MTAV…AVAL, LLLA…VLAI, and LFVV…YVPA.

Belongs to the KdpA family. In terms of assembly, the system is composed of three essential subunits: KdpA, KdpB and KdpC.

The protein localises to the cell inner membrane. Functionally, part of the high-affinity ATP-driven potassium transport (or Kdp) system, which catalyzes the hydrolysis of ATP coupled with the electrogenic transport of potassium into the cytoplasm. This subunit binds the periplasmic potassium ions and delivers the ions to the membrane domain of KdpB through an intramembrane tunnel. The protein is Potassium-transporting ATPase potassium-binding subunit of Methylibium petroleiphilum (strain ATCC BAA-1232 / LMG 22953 / PM1).